The chain runs to 309 residues: Taste receptor type 2 member 8 (309 aa).

Over 1–7 (MFSPADN) the chain is Extracellular. The chain crosses the membrane as a helical span at residues 8 to 28 (IFIILITGEFILGILGNGYIA). Residues 29 to 50 (LVNWIDWIKKKKISTTDYILTN) lie on the Cytoplasmic side of the membrane. A helical membrane pass occupies residues 51–71 (LVISRICLISVIVVNGIVTVL). Residues 72–82 (YPDVYTKSKLQ) lie on the Extracellular side of the membrane. A helical membrane pass occupies residues 83-103 (IAISTFWTFANYLNMWFTTCL). Topologically, residues 104–131 (NVFYFLKIANSSHPLFLWLKQKIDMVVR) are cytoplasmic. A helical transmembrane segment spans residues 132-152 (WILLGCFAISLLVSLIIAIVL). The Extracellular portion of the chain corresponds to 153–184 (SRDYRFHAIAKHKRNITEMFHVSKMLYFEPLT). N-linked (GlcNAc...) asparagine glycosylation occurs at Asn167. A helical membrane pass occupies residues 185–205 (LFNLLAIVPFIVSLMSFFLLV). The Cytoplasmic segment spans residues 206-239 (RSLQRHTKQIKLYATGGRDPSTEAHVRAIKTMTS). A helical membrane pass occupies residues 240–260 (FIFFFFLYYITSLLVTFSYLM). The Extracellular segment spans residues 261-266 (TKYKLA). A helical membrane pass occupies residues 267–287 (MAFGEIVAILYPSGHSFILII). The Cytoplasmic segment spans residues 288-309 (LNNKLRQASVRMLTCIKITCVI).

The protein belongs to the G-protein coupled receptor T2R family.

Its subcellular location is the membrane. Its function is as follows. Receptor that may play a role in the perception of bitterness and is gustducin-linked. May play a role in sensing the chemical composition of the gastrointestinal content. The activity of this receptor may stimulate alpha gustducin, mediate PLC-beta-2 activation and lead to the gating of TRPM5. This chain is Taste receptor type 2 member 8 (TAS2R8), found in Pongo pygmaeus (Bornean orangutan).